Here is a 365-residue protein sequence, read N- to C-terminus: NADH-quinone oxidoreductase subunit 8 (365 aa).

The next 9 helical transmembrane spans lie at 11–31, 80–100, 120–140, 157–177, 192–212, 252–272, 273–293, 310–330, and 336–356; these read WMVALKALLVVVGLLTAFAFM, FLFVLAPLISVVFALLAFGLI, LGILYLFAVSELAVYGIFLSG, ASLISYELGLGLALLAPVLLV, HGWLFLYAFPAFLVYLIASMA, FITASALIPTLFLGGWTMPVL, EVPYLWMFLKIAFFLFFFIWI, WGFLFPLALLWFLVTALVVAL, and YLLYLSALSFLVLLGAVLYTP.

Belongs to the complex I subunit 1 family. As to quaternary structure, NDH-1 is composed of 15 different subunits, Nqo1 to Nqo15. The complex has a L-shaped structure, with the hydrophobic arm (subunits Nqo7, Nqo8 and Nqo10 to Nqo14) embedded in the membrane and the hydrophilic peripheral arm (subunits Nqo1 to Nqo6, Nqo9 and Nqo15) protruding into the bacterial cytoplasm. The hydrophilic domain contains all the redox centers.

Its subcellular location is the cell inner membrane. It catalyses the reaction a quinone + NADH + 5 H(+)(in) = a quinol + NAD(+) + 4 H(+)(out). NDH-1 shuttles electrons from NADH, via FMN and iron-sulfur (Fe-S) centers, to quinones in the respiratory chain. The immediate electron acceptor for the enzyme in this species is menaquinone. Couples the redox reaction to proton translocation (for every two electrons transferred, four hydrogen ions are translocated across the cytoplasmic membrane), and thus conserves the redox energy in a proton gradient required for the synthesis of ATP. In Thermus thermophilus (strain ATCC 27634 / DSM 579 / HB8), this protein is NADH-quinone oxidoreductase subunit 8 (nqo8).